Reading from the N-terminus, the 225-residue chain is ATP-dependent Clp protease proteolytic subunit (225 aa).

The active-site Nucleophile is S126. Residue H151 is part of the active site.

This sequence belongs to the peptidase S14 family. In terms of assembly, fourteen ClpP subunits assemble into 2 heptameric rings which stack back to back to give a disk-like structure with a central cavity, resembling the structure of eukaryotic proteasomes.

Its subcellular location is the cytoplasm. It carries out the reaction Hydrolysis of proteins to small peptides in the presence of ATP and magnesium. alpha-casein is the usual test substrate. In the absence of ATP, only oligopeptides shorter than five residues are hydrolyzed (such as succinyl-Leu-Tyr-|-NHMec, and Leu-Tyr-Leu-|-Tyr-Trp, in which cleavage of the -Tyr-|-Leu- and -Tyr-|-Trp bonds also occurs).. Cleaves peptides in various proteins in a process that requires ATP hydrolysis. Has a chymotrypsin-like activity. Plays a major role in the degradation of misfolded proteins. This is ATP-dependent Clp protease proteolytic subunit from Psychrobacter arcticus (strain DSM 17307 / VKM B-2377 / 273-4).